Consider the following 60-residue polypeptide: Ribosome biogenesis protein Nop10 (60 aa).

A disordered region spans residues 29-60 (CDGPTENSAPAPFSPEDPYGEYRRRVRRRASE).

Belongs to the NOP10 family.

Involved in ribosome biogenesis; more specifically in 18S rRNA pseudouridylation and in cleavage of pre-rRNA. In Halorubrum lacusprofundi (strain ATCC 49239 / DSM 5036 / JCM 8891 / ACAM 34), this protein is Ribosome biogenesis protein Nop10.